The sequence spans 125 residues: UPF0593 mitochondrial protein C806.05 (125 aa).

It belongs to the UPF0593 family.

It is found in the mitochondrion. This chain is UPF0593 mitochondrial protein C806.05, found in Schizosaccharomyces pombe (strain 972 / ATCC 24843) (Fission yeast).